The chain runs to 252 residues: Probable transcriptional regulator SauR (252 aa).

One can recognise an HTH iclR-type domain in the interval 6-68; it reads NAAAVRAFRI…AGNRHYECSS (63 aa). Residues 28 to 47 constitute a DNA-binding region (H-T-H motif); the sequence is LAAIVQAIELPKQTVHRILK. The 170-residue stretch at 83–252 folds into the IclR-ED domain; that stretch reads PAAARHAILQ…ADEMVKTFCE (170 aa).

May regulate transcription of the sauSTU operon. The sequence is that of Probable transcriptional regulator SauR (sauR) from Cupriavidus necator (strain ATCC 17699 / DSM 428 / KCTC 22496 / NCIMB 10442 / H16 / Stanier 337) (Ralstonia eutropha).